The chain runs to 654 residues: Endoplasmic reticulum chaperone BiP (654 aa).

A signal peptide spans 1–18; that stretch reads MKLSLVAAVLLLLCAARA. The tract at residues 1–80 is required for interaction with ELAPOR1; that stretch reads MKLSLVAAVL…EGERLIGDAA (80 aa). 36–39 provides a ligand contact to ATP; it reads GTTY. Ser86 carries the post-translational modification Phosphoserine. ATP is bound at residue Lys96. Residue Lys125 is modified to N6-acetyllysine. The nucleotide-binding (NBD) stretch occupies residues 125 to 280; sequence KPYIQVDIGG…KKKTGKDVRK (156 aa). 3'-nitrotyrosine is present on Tyr160. An N6-acetyllysine modification is found at Lys213. 227 to 229 serves as a coordination point for ATP; that stretch reads GGT. Lys271 carries the N6-acetyllysine modification. ATP is bound at residue 293–300; the sequence is EKAKRALS. Lys326 carries the post-translational modification N6-acetyllysine. A Glycyl lysine isopeptide (Lys-Gly) (interchain with G-Cter in SUMO2) cross-link involves residue Lys352. Lys353 carries the N6-acetyllysine; alternate modification. A Glycyl lysine isopeptide (Lys-Gly) (interchain with G-Cter in SUMO1); alternate cross-link involves residue Lys353. ATP is bound at residue 364-367; sequence GSTR. Residues 409–419 form an interdomain linker region; it reads QDTGDLVLLDV. A substrate-binding (SBD) region spans residues 420-500; the sequence is CPLTLGIETV…PRGVPQIEVT (81 aa). An N6-succinyllysine modification is found at Lys447. An Omega-N-methylarginine modification is found at Arg492. Thr518 is subject to O-AMP-threonine; alternate. Thr518 is modified (phosphothreonine; alternate). Lys585 carries the post-translational modification N6,N6,N6-trimethyllysine; by METTL21A; in vitro. At Lys585 the chain carries N6,N6-dimethyllysine; alternate. Lys585 bears the N6-methyllysine; alternate mark. Lys591 carries the post-translational modification N6-methyllysine. The segment at 632 to 654 is disordered; it reads SKLYGSAGPPPTGEEDTSERDEL. 2 positions are modified to phosphothreonine: Thr643 and Thr648. Positions 644–654 are enriched in acidic residues; that stretch reads GEEDTSERDEL. Ser649 carries the phosphoserine modification. The Prevents secretion from ER motif lies at 651 to 654; it reads RDEL.

It belongs to the heat shock protein 70 family. In terms of assembly, monomer and homooligomer; homooligomerization via the interdomain linker inactivates the chaperone activity and acts as a storage of HSPA5/BiP molecules. Interacts with DNAJC1 (via J domain). Component of an EIF2 complex at least composed of CELF1/CUGBP1, CALR, CALR3, EIF2S1, EIF2S2, HSP90B1 and HSPA5. Part of a large chaperone multiprotein complex comprising DNAJB11, HSP90B1, HSPA5, HYOU, PDIA2, PDIA4, PDIA6, PPIB, SDF2L1, UGGT1 and very small amounts of ERP29, but not, or at very low levels, CALR nor CANX. Interacts with TMEM132A and TRIM21. May form a complex with ERLEC1, OS9, SEL1L and SYVN1. Interacts with DNAJC10. Interacts with DNAJB9/ERdj4; leading to recruit HSPA5/BiP to ERN1/IRE1. Interacts with ERN1/IRE1 (via luminal domain); the interaction takes place following interaction with DNAJB9/ERdj4 and leads to inactivate ERN1/IRE1, the interaction also competitively inhibits ERN1 interaction with MANF. Interacts directly with MANF (via SAP domain); the interaction inhibits ATP binding to HSPA5/BiP and subsequent nucleotide exchange. Interacts with EIF2AK3/PERK (via luminal domain); interaction leads to inactivate EIF2AK3/PERK. Interacts with MX1. Interacts with METTL23. Interacts with CEMIP; the interaction induces calcium leakage from the endoplasmic reticulum and cell migration. Interacts with PCSK4 form; the interaction takes place in the endoplasmic reticulum. Interacts with CIPC. Interacts with CCDC88B (via C-terminus); the interaction opposes ERN1-mediated JNK activation, protecting against apoptosis. Interacts with INPP5K; necessary for INPP5K localization at the endoplasmic reticulum. Interacts with MANF; the interaction is direct. Interacts with LOXL2; leading to activate the ERN1/IRE1-XBP1 pathway of the unfolded protein response. Interacts with CLU under stressed condition; interaction increases CLU protein stability; facilitates its retrotranslocation and redistribution to the mitochondria; cooperatively suppress stress-induced apoptosis by stabilizing mitochondrial membrane integrity. Interacts with CCDC47. Interacts with CLN3. Interacts with ELAPOR1; may regulate the function of HSPA5 in apoptosis and cell proliferation. Interacts with CASP7. Interacts with ILDR2; the interaction stabilizes ILDR2 expression. Interacts with ADAM7. In terms of processing, in unstressed cells, AMPylation at Thr-518 by FICD inactivates the chaperome activity: AMPylated form is locked in a relatively inert state and only weakly stimulated by J domain-containing proteins. In response to endoplasmic reticulum stress, de-AMPylation by the same protein, FICD, restores the chaperone activity.

It is found in the endoplasmic reticulum lumen. The protein localises to the melanosome. The protein resides in the cytoplasm. Its subcellular location is the cell surface. It carries out the reaction ATP + H2O = ADP + phosphate + H(+). Its activity is regulated as follows. The chaperone activity is regulated by ATP-induced allosteric coupling of the nucleotide-binding (NBD) and substrate-binding (SBD) domains. In the ADP-bound and nucleotide-free (apo) states, the two domains have little interaction. In contrast, in the ATP-bound state the two domains are tightly coupled, which results in drastically accelerated kinetics in both binding and release of polypeptide substrates. J domain-containing co-chaperones (DNAJB9/ERdj4 or DNAJC10/ERdj5) stimulate the ATPase activity and are required for efficient substrate recognition by HSPA5/BiP. Homooligomerization inactivates participating HSPA5/BiP protomers and probably act as reservoirs to store HSPA5/BiP molecules when they are not needed by the cell. Endoplasmic reticulum chaperone that plays a key role in protein folding and quality control in the endoplasmic reticulum lumen. Involved in the correct folding of proteins and degradation of misfolded proteins via its interaction with DNAJC10/ERdj5, probably to facilitate the release of DNAJC10/ERdj5 from its substrate. Acts as a key repressor of the EIF2AK3/PERK and ERN1/IRE1-mediated unfolded protein response (UPR). In the unstressed endoplasmic reticulum, recruited by DNAJB9/ERdj4 to the luminal region of ERN1/IRE1, leading to disrupt the dimerization of ERN1/IRE1, thereby inactivating ERN1/IRE1. Also binds and inactivates EIF2AK3/PERK in unstressed cells. Accumulation of misfolded protein in the endoplasmic reticulum causes release of HSPA5/BiP from ERN1/IRE1 and EIF2AK3/PERK, allowing their homodimerization and subsequent activation. Plays an auxiliary role in post-translational transport of small presecretory proteins across endoplasmic reticulum (ER). May function as an allosteric modulator for SEC61 channel-forming translocon complex, likely cooperating with SEC62 to enable the productive insertion of these precursors into SEC61 channel. Appears to specifically regulate translocation of precursors having inhibitory residues in their mature region that weaken channel gating. May also play a role in apoptosis and cell proliferation. This is Endoplasmic reticulum chaperone BiP from Ictidomys tridecemlineatus (Thirteen-lined ground squirrel).